The chain runs to 202 residues: Nudix hydrolase 13, mitochondrial (202 aa).

A Nudix hydrolase domain is found at 18-167; it reads NFRLVSGCIP…WMQSALEEFL (150 aa). The Nudix box motif lies at 65–86; it reads GGWEDDETVLEAASREAMEEAG. Residues glutamate 80 and glutamate 84 each contribute to the Mg(2+) site.

The protein belongs to the Nudix hydrolase family. In terms of assembly, monomer. Mg(2+) is required as a cofactor. As to expression, expressed in roots, leaves, stems and inflorescences.

It localises to the mitochondrion. Inhibited by fluoride. In terms of biological role, mediates the hydrolysis of some nucleoside diphosphate derivatives. Can use diadenosine 5',5'''-P(1)P(6) hexaphosphate (Ap(6)A), diadenosine 5',5'''-P(1)P(5) pentaphosphate (Ap(5)A) and adenosine tetraphosphate (p(4)A) as substrates, but not diadenosine 5',5'''-P(1)P(4) tetraphosphate (Ap(4)A), diadenosine 5',5'''-P(1)P(3) triphosphate (Ap(3)A), deoxyribonucleoside triphosphates, ribonucleoside triphosphates, diphosphoinositol pentakisphosphate (PP-InsP(5)) and 5-phospho-alpha-D-ribosyl diphosphate (PRPP). The protein is Nudix hydrolase 13, mitochondrial (NUDT13) of Arabidopsis thaliana (Mouse-ear cress).